Consider the following 130-residue polypeptide: MAQAQYAGTGRRKNAVARVRLVPGTGKITVNSKDVEEYIPHADLRLVINQPFAVTSTEGSYDVFVNVNGGGYGGQSGAIRHGIARALLQVDPDFRDSLKRAGLLTRDARMVERKKPGLKKARKASQFSKR.

Belongs to the universal ribosomal protein uS9 family.

This chain is Small ribosomal subunit protein uS9, found in Streptococcus uberis (strain ATCC BAA-854 / 0140J).